We begin with the raw amino-acid sequence, 272 residues long: 3-methyl-2-oxobutanoate hydroxymethyltransferase (272 aa).

Positions 51 and 90 each coordinate Mg(2+). 3-methyl-2-oxobutanoate-binding positions include 51–52, Asp-90, and Lys-119; that span reads DS. Glu-121 contacts Mg(2+). Glu-188 serves as the catalytic Proton acceptor.

The protein belongs to the PanB family. In terms of assembly, homodecamer; pentamer of dimers. Mg(2+) is required as a cofactor.

The protein localises to the cytoplasm. It carries out the reaction 3-methyl-2-oxobutanoate + (6R)-5,10-methylene-5,6,7,8-tetrahydrofolate + H2O = 2-dehydropantoate + (6S)-5,6,7,8-tetrahydrofolate. The protein operates within cofactor biosynthesis; (R)-pantothenate biosynthesis; (R)-pantoate from 3-methyl-2-oxobutanoate: step 1/2. Functionally, catalyzes the reversible reaction in which hydroxymethyl group from 5,10-methylenetetrahydrofolate is transferred onto alpha-ketoisovalerate to form ketopantoate. The polypeptide is 3-methyl-2-oxobutanoate hydroxymethyltransferase (Dechloromonas aromatica (strain RCB)).